Reading from the N-terminus, the 415-residue chain is Probable G-protein coupled receptor 19 (415 aa).

Over methionine 1 to serine 69 the chain is Extracellular. 2 N-linked (GlcNAc...) asparagine glycosylation sites follow: asparagine 25 and asparagine 52. A helical membrane pass occupies residues isoleucine 70 to isoleucine 90. The Cytoplasmic portion of the chain corresponds to histidine 91–tyrosine 102. A helical transmembrane segment spans residues phenylalanine 103–valine 123. The Extracellular segment spans residues leucine 124–glutamine 152. Cysteine 138 and cysteine 210 are joined by a disulfide. Residues isoleucine 153 to phenylalanine 173 traverse the membrane as a helical segment. Residues lysine 174 to arginine 182 are Cytoplasmic-facing. The helical transmembrane segment at methionine 183–glycine 203 threads the bilayer. Residues serine 204 to threonine 221 are Extracellular-facing. The chain crosses the membrane as a helical span at residues alanine 222–phenylalanine 242. Residues tyrosine 243–methionine 277 are Cytoplasmic-facing. A helical membrane pass occupies residues phenylalanine 278 to tryptophan 298. Topologically, residues histidine 299–serine 309 are extracellular. Residues leucine 310–isoleucine 332 traverse the membrane as a helical segment. The Cytoplasmic portion of the chain corresponds to tyrosine 333–valine 415.

Belongs to the G-protein coupled receptor 1 family. In terms of tissue distribution, abundant expression in the brain.

Its subcellular location is the cell membrane. In terms of biological role, G-protein coupled receptor that plays a role in the regulation of circadian rhythms and energy metabolism. Participates in maintaining proper circadian gene expression in the suprachiasmatic nucleus (SCN), the locus of the master circadian clock in the brain. May function as a coordinator of aging-associated metabolic dysfunction, stress response, DNA integrity management, and eventual senescence. Upon binding to adropin, modulates mitochondrial energy metabolism via the p44/42-PDK4 signaling pathway, influencing pyruvate dehydrogenase activity. This chain is Probable G-protein coupled receptor 19 (Gpr19), found in Rattus norvegicus (Rat).